A 298-amino-acid chain; its full sequence is Tryptophan 2,3-dioxygenase (298 aa).

Substrate is bound by residues 51–55 (FIIQH), tyrosine 113, and arginine 117. Histidine 240 is a binding site for heme. Threonine 254 contacts substrate.

The protein belongs to the tryptophan 2,3-dioxygenase family. In terms of assembly, homotetramer. Heme serves as cofactor.

It carries out the reaction L-tryptophan + O2 = N-formyl-L-kynurenine. The protein operates within amino-acid degradation; L-tryptophan degradation via kynurenine pathway; L-kynurenine from L-tryptophan: step 1/2. Functionally, heme-dependent dioxygenase that catalyzes the oxidative cleavage of the L-tryptophan (L-Trp) pyrrole ring and converts L-tryptophan to N-formyl-L-kynurenine. Catalyzes the oxidative cleavage of the indole moiety. The polypeptide is Tryptophan 2,3-dioxygenase (Xanthomonas euvesicatoria pv. vesicatoria (strain 85-10) (Xanthomonas campestris pv. vesicatoria)).